Reading from the N-terminus, the 174-residue chain is MTGLNTAGHDRDYDTAGLNRELQDKGFLLTTTEDLINWARTGSLHWMTFGLACCAVEMMHTSMPRYDVERFGVAPRASPRQSDVMIVAGTLTNKMAPALRKVYDQMPEPRYVISMGSCANGGGYYHYSYSVVRGCDRIVPVDIYVPGCPPTAEALLYGILQLQRRIRRTGTITR.

[4Fe-4S] cluster is bound by residues C53, C54, C118, and C148.

The protein belongs to the complex I 20 kDa subunit family. NDH-1 is composed of 14 different subunits. Subunits NuoB, C, D, E, F, and G constitute the peripheral sector of the complex. It depends on [4Fe-4S] cluster as a cofactor.

It localises to the cell inner membrane. It catalyses the reaction a quinone + NADH + 5 H(+)(in) = a quinol + NAD(+) + 4 H(+)(out). NDH-1 shuttles electrons from NADH, via FMN and iron-sulfur (Fe-S) centers, to quinones in the respiratory chain. Couples the redox reaction to proton translocation (for every two electrons transferred, four hydrogen ions are translocated across the cytoplasmic membrane), and thus conserves the redox energy in a proton gradient. This chain is NADH-quinone oxidoreductase subunit B 2, found in Cereibacter sphaeroides (strain ATCC 17025 / ATH 2.4.3) (Rhodobacter sphaeroides).